The chain runs to 251 residues: Uridylate kinase (251 aa).

Position 19–22 (19–22) interacts with ATP; it reads KLSG. G61 provides a ligand contact to UMP. Residues G62 and R66 each contribute to the ATP site. UMP contacts are provided by residues D81 and 142–149; that span reads IGNPFFTT. Residues T169, Q170, Y175, and D178 each contribute to the ATP site.

It belongs to the UMP kinase family. Homohexamer.

The protein localises to the cytoplasm. The catalysed reaction is UMP + ATP = UDP + ADP. It functions in the pathway pyrimidine metabolism; CTP biosynthesis via de novo pathway; UDP from UMP (UMPK route): step 1/1. Inhibited by UTP. In terms of biological role, catalyzes the reversible phosphorylation of UMP to UDP. This chain is Uridylate kinase, found in Hyphomonas neptunium (strain ATCC 15444).